The primary structure comprises 152 residues: Transcriptional repressor NrdR (152 aa).

Residues 3–34 (CPYCSYNESKVVDSRSTEDSISIRRRRECLEC) fold into a zinc finger. Residues 49 to 139 (ILVIKKNLNR…VYRQFKDINT (91 aa)) enclose the ATP-cone domain.

Belongs to the NrdR family. It depends on Zn(2+) as a cofactor.

In terms of biological role, negatively regulates transcription of bacterial ribonucleotide reductase nrd genes and operons by binding to NrdR-boxes. This is Transcriptional repressor NrdR from Clostridium tetani (strain Massachusetts / E88).